Here is a 485-residue protein sequence, read N- to C-terminus: Subtilisin-like protease 1 (485 aa).

The first 19 residues, M1 to A19, serve as a signal peptide directing secretion. Positions G20 to H116 are excised as a propeptide. The region spanning S34–H116 is the Inhibitor I9 domain. One can recognise a Peptidase S8 domain in the interval S126–K400. Residues D158 and H190 each act as charge relay system in the active site. Residue N251 is glycosylated (N-linked (GlcNAc...) asparagine). Residue S345 is the Charge relay system of the active site. A compositionally biased stretch (polar residues) spans G377–I394. The disordered stretch occupies residues G377 to N462. The span at P409 to P418 shows a compositional bias: pro residues. Residues S419 to Q428 show a composition bias toward low complexity. Positions P433–P455 are enriched in pro residues.

It belongs to the peptidase S8 family.

The protein resides in the secreted. Functionally, secreted subtilisin-like serine protease with keratinolytic activity that contributes to pathogenicity. The protein is Subtilisin-like protease 1 (SUB1) of Arthroderma otae (strain ATCC MYA-4605 / CBS 113480) (Microsporum canis).